The following is a 60-amino-acid chain: UPF0434 protein YcaR (60 aa).

It belongs to the UPF0434 family.

The protein is UPF0434 protein YcaR of Escherichia coli O139:H28 (strain E24377A / ETEC).